We begin with the raw amino-acid sequence, 189 residues long: HTH-type transcriptional repressor AcnR (189 aa).

The 61-residue stretch at 10 to 70 (AERKVEILSG…EVAHEDMRKM (61 aa)) folds into the HTH tetR-type domain. Residues 33-52 (TVARLEETIGKSRGAIFHHY) constitute a DNA-binding region (H-T-H motif). Residues 79-80 (LI), Arg-130, and Gln-134 contribute to the citrate site. Position 181 (Glu-181) interacts with Mg(2+). Arg-185 provides a ligand contact to citrate.

Homodimer.

Its function is as follows. AcnR negatively controls the expression of the aconitase gene acn. This chain is HTH-type transcriptional repressor AcnR, found in Corynebacterium jeikeium (strain K411).